We begin with the raw amino-acid sequence, 121 residues long: Large ribosomal subunit protein uL18 (121 aa).

Belongs to the universal ribosomal protein uL18 family. As to quaternary structure, part of the 50S ribosomal subunit; part of the 5S rRNA/L5/L18/L25 subcomplex. Contacts the 5S and 23S rRNAs.

Its function is as follows. This is one of the proteins that bind and probably mediate the attachment of the 5S RNA into the large ribosomal subunit, where it forms part of the central protuberance. In Buchnera aphidicola subsp. Baizongia pistaciae (strain Bp), this protein is Large ribosomal subunit protein uL18.